Consider the following 78-residue polypeptide: Metallothionein-like protein type 2 (78 aa).

This sequence belongs to the metallothionein superfamily. Type 15 family.

Its function is as follows. Metallothioneins have a high content of cysteine residues that bind various heavy metals. In Musa acuminata (Banana), this protein is Metallothionein-like protein type 2.